Reading from the N-terminus, the 1066-residue chain is MALDGERGEQEEEKKKKKKKKKRKKKEEEGAEKSSSPFAATMGEDDAALRASGRGLSDPWADSVGVRPRTTERHIAVHKRLVLAFAVSIVALLAVTMLAVLLSLRFDECGASAAMPGTDGGLGGFPERGGNSSYPGSARRNHHAGEESSQREIGEVGTAGTPSAHPPSEEEQEQWQPWTQLRLSGHLKPLHYNLMLTAFMENFTFSGEVNVEIACQNATRYVVLHASRVAVEKVQVAEDRAFGAVPVAGFFLYPQTQVLVVVLNRTLDAQRHYNLKIIYNALIENELLGFFRSSYVIHGERRFLGVTQFSPTHARKAFPCFDEPIYKATFKISIKHQATYLSLSNMPVETSVFEEDGWVTDHFSQTPLMSTYYLAWAICNFTYRETTTKSGVVVRLYARPDAIRRGSGDYALHITKRLIEFYEDYFKVPYSLPKLDLLAVPKHPYAAMENWGLSIFVEQRILLDPSVSSISYLLDVTMVIVHEICHQWFGDLVTPVWWEDVWLKEGFAHYFEFVGTDYLYPSWNMEKQRFLTDVLHEVMLLDGLASSHPVSQEVLRATDIDKVFDWIAYKKGAALIRMLANFMGHSVFQRGLQDYLTIHKYGNAARNDLWNTLSEALKRNGKYVNIQEVMDQWTLQMGYPVITILGNMTAENRILITQQHFIYDIGAKTKALQLQNSSYLWQIPLTIVVGNRSHVSSEAIIWVSNKSEHHRITYLDKGSWILGNINQTGYFRVNYDLRNWRLLIDQLIRNHEVLSVSNRAGLIDDAFSLARAGYLPQNIPLEIIRYLSEEKDFLPWHAASRALYPLDKLLDRMENYNIFNEYILKQVATTYSKLGWPKNNFNGSVVQASYQHEELRREVIMLACSFGNKHCHQQASTLISDWISSNRNRIPLNVRDIVYCTGVSLLDEDVWEFIWMKFHSTTAVSEKKILLEALTCSDDRNLLSRLLNLSLNSEVVLDQDAIDVIIHVARNPHGRDLAWKFFRDKWKILNTRYGEALFMNSKLISGVTEFLNTEGELKELKNFMKSYDGVASASFSRAVETVEANVRWKRLYQDELFQWLGKAMRH.

Residues 1 to 14 (MALDGERGEQEEEK) are compositionally biased toward basic and acidic residues. The disordered stretch occupies residues 1–43 (MALDGERGEQEEEKKKKKKKKKRKKKEEEGAEKSSSPFAATMG). Residues 1–81 (MALDGERGEQ…ERHIAVHKRL (81 aa)) lie on the Cytoplasmic side of the membrane. Positions 15–25 (KKKKKKKKRKK) are enriched in basic residues. Threonine 71 carries the post-translational modification Phosphothreonine; by PKC. Residues 82–102 (VLAFAVSIVALLAVTMLAVLL) traverse the membrane as a helical; Signal-anchor for type II membrane protein segment. Over 103-1066 (SLRFDECGAS…FQWLGKAMRH (964 aa)) the chain is Extracellular. Residues 117–177 (GTDGGLGGFP…SEEEQEQWQP (61 aa)) are disordered. Residues 118–127 (TDGGLGGFPE) show a composition bias toward gly residues. A glycan (N-linked (GlcNAc...) asparagine) is linked at asparagine 131. A compositionally biased stretch (basic and acidic residues) spans 143 to 154 (HAGEESSQREIG). N-linked (GlcNAc...) asparagine glycosylation is found at asparagine 202, asparagine 217, asparagine 264, and asparagine 380. 446 to 450 (AAMEN) provides a ligand contact to substrate. Histidine 482 provides a ligand contact to Zn(2+). Glutamate 483 acts as the Proton acceptor in catalysis. Zn(2+)-binding residues include histidine 486 and glutamate 505. 7 N-linked (GlcNAc...) asparagine glycosylation sites follow: asparagine 647, asparagine 676, asparagine 691, asparagine 705, asparagine 726, asparagine 842, and asparagine 948.

This sequence belongs to the peptidase M1 family. In terms of assembly, homodimer; disulfide-linked. It depends on Zn(2+) as a cofactor. In terms of tissue distribution, predominantly expressed in brain and pituitary. Lower levels in lung and liver.

The protein resides in the membrane. It carries out the reaction Release of the N-terminal pyroglutamyl group from pGlu-|-His-Xaa tripeptides and pGlu-|-His-Xaa-Gly tetrapeptides.. In terms of biological role, specific inactivation of TRH after its release. In Rattus norvegicus (Rat), this protein is Thyrotropin-releasing hormone-degrading ectoenzyme (Trhde).